Consider the following 363-residue polypeptide: Protein LEG1 homolog (363 aa).

An N-terminal signal peptide occupies residues 1–19 (MQCVWTLSLLQLVALWANA). Residues asparagine 79, asparagine 261, and asparagine 292 are each glycosylated (N-linked (GlcNAc...) asparagine).

The protein belongs to the LEG1 family.

It is found in the secreted. In terms of biological role, may be involved in early liver development. This chain is Protein LEG1 homolog, found in Oncorhynchus mykiss (Rainbow trout).